The primary structure comprises 1216 residues: Apical endosomal glycoprotein (1216 aa).

The first 22 residues, 1 to 22 (MPLSSHLLPALVLFLAGSSGWA), serve as a signal peptide directing secretion. Topologically, residues 23 to 1151 (WVPNHCRSPG…SPGNTAAPGS (1129 aa)) are extracellular. In terms of domain architecture, LDL-receptor class A 1; truncated spans 26-53 (NHCRSPGQAVCNFVCDCRDCSDEAQCGY). In terms of domain architecture, MAM 1 spans 64 to 222 (FACDFEQDPC…DDLEFWDCGL (159 aa)). An N-linked (GlcNAc...) asparagine glycan is attached at asparagine 203. Positions 228-266 (NCPPGHHHCQNKVCVEPQQLCDGEDNCGDLSDENPLTCG) constitute an LDL-receptor class A 2 domain. Cystine bridges form between cysteine 229-cysteine 241, cysteine 236-cysteine 254, and cysteine 248-cysteine 265. In terms of domain architecture, MAM 2 spans 269-425 (IATDFETGLG…DLILSDHCRP (157 aa)). Residues 280–307 (WNRSEGWSRNHRAGGPERPSWPRRDHSR) are disordered. N-linked (GlcNAc...) asparagine glycans are attached at residues asparagine 281 and asparagine 339. Residues 429–455 (VSTLQPLPPGPRAPAPQPLPPSSRLQD) form a disordered region. Pro residues predominate over residues 434-449 (PLPPGPRAPAPQPLPP). The LDL-receptor class A 3 domain maps to 456–491 (SCKQGHLACGDLCVPPEQLCDFEEQCAGGEDEQACG). Cystine bridges form between cysteine 457–cysteine 468, cysteine 464–cysteine 481, and cysteine 475–cysteine 490. 4 consecutive MAM domains span residues 491–644 (GTTD…DCSP), 654–809 (VSCN…PCWA), 811–969 (NYCS…PCPQ), and 971–1138 (GSCD…HCQQ). Asparagine 583 and asparagine 636 each carry an N-linked (GlcNAc...) asparagine glycan. A glycan (N-linked (GlcNAc...) asparagine) is linked at asparagine 835. A helical membrane pass occupies residues 1152 to 1172 (VPAVVGSALLLLMLLVLLGLG). Residues 1173 to 1216 (GRRWLQKKGSCPFQSNTEATAPGFDNILFNADGVTLPASVTSDP) are Cytoplasmic-facing.

The protein localises to the membrane. In terms of biological role, probably involved in the sorting and selective transport of receptors and ligands across polarized epithelia. The chain is Apical endosomal glycoprotein from Homo sapiens (Human).